Here is a 371-residue protein sequence, read N- to C-terminus: MTTSPYPIETPFKVCIVGSGNWGTAVAKLVAENCAEKPNIFQRDVKMWVFEEEIEGRKLTEIINTEHENVKYLPEIKLPTNLVANPDIVDTVQDADLIVFNIPHQFLGRIVKQIEGKVKPTARAISCLKGLDVSPEGCKLLSTSITDTLKIYCGVLSGANIANEVAKGNWSETSIAYTVPEDFRGAGKDIDPFILKEAFHRPYFHVRVIEDVVGASIAGALKNVIACSVGFVEGAGWGDNAKAAIMRIGIKETIRFASYWELFKIKALSPPNPKTFTEESAGVADLITTCSGGRNVKVARYMIKNNVDAFEAEKIVLKGQSSQGILTAKEVHELLTNFNLQDEFPLLEATYKVIYENGSVDDFPQLLEGDQ.

Residues 18–23 (GSGNWG), phenylalanine 50, and phenylalanine 106 contribute to the NAD(+) site. Lysine 129 contacts substrate. Alanine 162 is an NAD(+) binding site. Lysine 222 (proton acceptor) is an active-site residue. 2 residues coordinate NAD(+): arginine 294 and glutamine 323. Substrate is bound at residue 294–295 (RN).

The protein belongs to the NAD-dependent glycerol-3-phosphate dehydrogenase family. In terms of assembly, interacts with human CFH/complement factor H; the interaction is direct and enables the pathogen to evade the host innate immune system. Interacts with human CFHR1/complement factor H-related protein 1; the interaction is direct. Interacts with human PLG/plasminogen; the interaction is direct and provides active plasmin on the surface of fungal cells.

Its subcellular location is the secreted. It localises to the cell wall. The protein localises to the cytoplasm. The protein resides in the peroxisome. The enzyme catalyses sn-glycerol 3-phosphate + NAD(+) = dihydroxyacetone phosphate + NADH + H(+). Its function is as follows. May catalyze the production and accumulation of glycerol during hyperosmotic stress conditions. Glycerol acts as a osmoregulator that prevents loss of water and turgor of the cells. Mediates evasion of the host innate immune system by binding inhibitory components of the host alternative complement system, in a manner dependent on estrogen-induced inhibition of EBP1. This is Glycerol-3-phosphate dehydrogenase [NAD(+)] 2 from Candida albicans (strain SC5314 / ATCC MYA-2876) (Yeast).